The following is a 284-amino-acid chain: Nucleotide-binding protein Sbal223_0704 (284 aa).

8 to 15 (GRSGSGKS) lines the ATP pocket. Residue 56-59 (DVRN) participates in GTP binding.

This sequence belongs to the RapZ-like family.

Functionally, displays ATPase and GTPase activities. The chain is Nucleotide-binding protein Sbal223_0704 from Shewanella baltica (strain OS223).